Consider the following 312-residue polypeptide: Ornithine carbamoyltransferase (312 aa).

Carbamoyl phosphate-binding positions include 59–62 (STRT), Gln-86, Arg-110, and 137–140 (HPCQ). L-ornithine is bound by residues Asn-167, Asp-231, and 235 to 236 (SM). Cys-271 and Arg-299 together coordinate carbamoyl phosphate.

Belongs to the aspartate/ornithine carbamoyltransferase superfamily. OTCase family.

It is found in the cytoplasm. The enzyme catalyses carbamoyl phosphate + L-ornithine = L-citrulline + phosphate + H(+). The protein operates within amino-acid biosynthesis; L-arginine biosynthesis; L-arginine from L-ornithine and carbamoyl phosphate: step 1/3. Its function is as follows. Reversibly catalyzes the transfer of the carbamoyl group from carbamoyl phosphate (CP) to the N(epsilon) atom of ornithine (ORN) to produce L-citrulline. The polypeptide is Ornithine carbamoyltransferase (Methanopyrus kandleri (strain AV19 / DSM 6324 / JCM 9639 / NBRC 100938)).